The chain runs to 488 residues: 3-octaprenyl-4-hydroxybenzoate carboxy-lyase (488 aa).

A Mn(2+)-binding site is contributed by Asn-172. Prenylated FMN contacts are provided by residues 175–177 (IYR), 189–191 (RWL), and 194–195 (RG). Glu-238 contacts Mn(2+). Asp-287 serves as the catalytic Proton donor.

This sequence belongs to the UbiD family. In terms of assembly, homohexamer. It depends on prenylated FMN as a cofactor. The cofactor is Mn(2+).

It is found in the cell membrane. It carries out the reaction a 4-hydroxy-3-(all-trans-polyprenyl)benzoate + H(+) = a 2-(all-trans-polyprenyl)phenol + CO2. The protein operates within cofactor biosynthesis; ubiquinone biosynthesis. Functionally, catalyzes the decarboxylation of 3-octaprenyl-4-hydroxy benzoate to 2-octaprenylphenol, an intermediate step in ubiquinone biosynthesis. The chain is 3-octaprenyl-4-hydroxybenzoate carboxy-lyase from Pseudomonas putida (strain W619).